Reading from the N-terminus, the 400-residue chain is Nicotinate phosphoribosyltransferase (400 aa).

His-220 carries the phosphohistidine; by autocatalysis modification.

It belongs to the NAPRTase family. Post-translationally, transiently phosphorylated on a His residue during the reaction cycle. Phosphorylation strongly increases the affinity for substrates and increases the rate of nicotinate D-ribonucleotide production. Dephosphorylation regenerates the low-affinity form of the enzyme, leading to product release.

The catalysed reaction is nicotinate + 5-phospho-alpha-D-ribose 1-diphosphate + ATP + H2O = nicotinate beta-D-ribonucleotide + ADP + phosphate + diphosphate. Its pathway is cofactor biosynthesis; NAD(+) biosynthesis; nicotinate D-ribonucleotide from nicotinate: step 1/1. Functionally, catalyzes the synthesis of beta-nicotinate D-ribonucleotide from nicotinate and 5-phospho-D-ribose 1-phosphate at the expense of ATP. The chain is Nicotinate phosphoribosyltransferase from Salmonella agona (strain SL483).